Reading from the N-terminus, the 727-residue chain is Platelet endothelial cell adhesion molecule (727 aa).

A signal peptide spans 1–17 (MLLALGLTLVLYASLQA). Topologically, residues 18–590 (EENSFTINSI…VRVFLAPWKK (573 aa)) are extracellular. 6 consecutive Ig-like C2-type domains span residues 40–126 (GQQL…PKVT), 135–213 (GGVV…PIRS), 225–309 (PKFE…IMVN), 315–391 (PKPK…LVPI), 413–472 (GHAI…NCHS), and 488–578 (PVDE…RSST). A disulfide bond links Cys47 and Cys99. Asn74 and Asn141 each carry an N-linked (GlcNAc...) asparagine glycan. Intrachain disulfides connect Cys142-Cys195 and Cys245-Cys293. N-linked (GlcNAc...) asparagine glycosylation is found at Asn309, Asn345, Asn360, Asn424, and Asn540. Disulfide bonds link Cys336-Cys375, Cys420-Cys465, and Cys512-Cys561. Residues 591 to 609 (GLIAVVVIGVVIATLIVAA) form a helical membrane-spanning segment. Topologically, residues 610-727 (KCYFLRKAKA…SRTEGSLNGT (118 aa)) are cytoplasmic. Residue Cys611 is the site of S-palmitoyl cysteine attachment. Positions 642 to 672 (SEPSVEANSHYGYDDVSGNDAVKPINQNKDP) are disordered. Short sequence motifs (ITIM motif) lie at residues 677-682 (VEYTEV) and 700-705 (TVYSEI). Phosphotyrosine; by FER is present on residues Tyr679 and Tyr702. Residues 698 to 718 (TETVYSEIRKVDPNLMENRYS) form a membrane-bound segment which detaches upon phosphorylation region. A may play a role in cytoprotective signaling region spans residues 710-727 (PNLMENRYSRTEGSLNGT). 2 positions are modified to phosphoserine: Ser718 and Ser723.

In terms of assembly, trans-homodimer (via Ig-like C2-type 1 and Ig-like C2-type 2 domains); trans-homodimerization is required for cell-cell interaction. Forms a complex with BDKRB2 and GNAQ. Interacts with BDKRB2 and GNAQ. Interacts with PTPN11; Tyr-702 is critical for PTPN11 recruitment. Interacts with FER. Interacts with CD177; the interaction is Ca(2+)-dependent; the interaction is direct. Phosphorylated on Ser and Tyr residues by src kinases after cellular activation. Upon activation, phosphorylated on Ser-718 which probably initiates the dissociation of the membrane-interaction segment (residues 698-718) from the cell membrane allowing the sequential phosphorylation of Tyr-702 and Tyr-679. Constitutively phosphorylated on Ser-723 in resting platelets. Phosphorylated on tyrosine residues by FER and FES in response to FCER1 activation. In endothelial cells Fyn mediates mechanical-force (stretch or pull) induced tyrosine phosphorylation. In terms of processing, palmitoylation by ZDHHC21 is necessary for cell surface expression in endothelial cells and enrichment in membrane rafts. Expressed in lung and platelets (at protein level).

The protein localises to the cell membrane. It is found in the membrane raft. Its subcellular location is the cell junction. Cell adhesion molecule which is required for leukocyte transendothelial migration (TEM) under most inflammatory conditions. Tyr-679 plays a critical role in TEM and is required for efficient trafficking of PECAM1 to and from the lateral border recycling compartment (LBRC) and is also essential for the LBRC membrane to be targeted around migrating leukocytes. Trans-homophilic interaction may play a role in endothelial cell-cell adhesion via cell junctions. Heterophilic interaction with CD177 plays a role in transendothelial migration of neutrophils. Homophilic ligation of PECAM1 prevents macrophage-mediated phagocytosis of neighboring viable leukocytes by transmitting a detachment signal. Promotes macrophage-mediated phagocytosis of apoptotic leukocytes by tethering them to the phagocytic cells; PECAM1-mediated detachment signal appears to be disabled in apoptotic leukocytes. Modulates bradykinin receptor BDKRB2 activation. Regulates bradykinin- and hyperosmotic shock-induced ERK1/2 activation in endothelial cells. Induces susceptibility to atherosclerosis. The protein is Platelet endothelial cell adhesion molecule (Pecam1) of Mus musculus (Mouse).